The sequence spans 3567 residues: Erythronolide synthase EryA2 (3567 aa).

The Ketosynthase family 3 (KS3) 1 domain occupies 30–455 (SDPIAIVSMA…GTNAHVIVEE (426 aa)). 2 module regions span residues 33–1467 (IAIV…QHLR) and 1491–3485 (IAIV…EHLR). C202 (acyl-thioester intermediate; for beta-ketoacyl synthase 1 activity) is an active-site residue. Residues H337 and H377 each act as for beta-ketoacyl synthase 1 activity in the active site. An acyltransferase 1 region spans residues 560-880 (VFLFPGQGSQ…MATAHVSGVD (321 aa)). S651 serves as the catalytic Acyl-ester intermediate; for acyltransferase 1 activity. A C2-type beta-ketoacyl reductase 1 region spans residues 1132–1297 (GTVLVTGAAS…CTSVAWTPWA (166 aa)). The active-site For C2-type beta-ketoacyl reductase 1 and probable racemase activity is Y1267. The interval 1364-1385 (GRGGQAEAEPDSGPTGEPAQRL) is disordered. One can recognise a Carrier 1 domain in the interval 1395–1470 (ENLLELVANA…ALAQHLRARL (76 aa)). S1430 is subject to O-(pantetheine 4'-phosphoryl)serine. A Ketosynthase family 3 (KS3) 2 domain is found at 1488–1912 (SEPIAIVGIG…GTNAHVIVEE (425 aa)). Residue C1661 is the Acyl-thioester intermediate; for beta-ketoacyl synthase 2 activity of the active site. Catalysis depends on for beta-ketoacyl synthase 2 activity residues H1796 and H1834. Positions 2015–2331 (LVFPGQGAQW…NLLRAHVHGV (317 aa)) are acyltransferase 2. S2105 acts as the Acyl-ester intermediate; for acyltransferase 2 activity in catalysis. Residues 2377–2502 (HPLLLAAVDV…GTLAQGVAAG (126 aa)) are N-terminal hotdog fold. The segment at 2377 to 2645 (HPLLLAAVDV…SLVVRSTGEK (269 aa)) is dehydratase. Residues 2377 to 2648 (HPLLLAAVDV…VRSTGEKWEQ (272 aa)) form the PKS/mFAS DH domain. Residue H2409 is the Proton acceptor; for dehydratase activity of the active site. Residues 2514–2648 (AVRIPLDDHY…VRSTGEKWEQ (135 aa)) form a C-terminal hotdog fold region. D2571 acts as the Proton donor; for dehydratase activity in catalysis. The enoyl reductase stretch occupies residues 2831–3131 (GAIDSVAFEP…RGRHVGKLVL (301 aa)). Y2874 (for enoyl reductase activity) is an active-site residue. Residues 2964 to 2973 (HAAAGGVGMA), 3149 to 3152 (TGTL), 3173 to 3176 (SRRG), 3202 to 3203 (DT), K3250, and 3272 to 3273 (FS) each bind NADP(+). The segment at 3141 to 3317 (GTVLITGGTG…AKALGWGLWA (177 aa)) is beta-ketoacyl reductase 2. Catalysis depends on Y3287, which acts as the For beta-ketoacyl reductase 2 activity. Positions 3413-3488 (AGLAELVRSH…AVAEHLRDRL (76 aa)) constitute a Carrier 2 domain. S3448 bears the O-(pantetheine 4'-phosphoryl)serine mark.

Homodimer. Erythronolide synthase is composed of EryAI, EryAII and EryAIII multimodular (2 modules) polypeptides each coding for a functional synthase subunit which participates in 2 of the six FAS-like elongation steps required for formation of the polyketide. Module 1, 2, 3, 4, 5, and 6 participating in biosynthesis steps 1, 2, 3, 4, 5, and 6, respectively. The cofactor is pantetheine 4'-phosphate.

It catalyses the reaction 6 (S)-methylmalonyl-CoA + propanoyl-CoA + 6 NADPH + 12 H(+) = 6-deoxyerythronolide B + 6 CO2 + 6 NADP(+) + 7 CoA + H2O. The protein operates within antibiotic biosynthesis; erythromycin biosynthesis. Its function is as follows. Involved in the biosynthesis of antibiotic erythromycin via the biosynthesis of its aglycone precursor, 6-deoxyerythronolide B (6-dEB). This chain is Erythronolide synthase EryA2, found in Saccharopolyspora erythraea (Streptomyces erythraeus).